A 107-amino-acid chain; its full sequence is DNA-directed RNA polymerase subunit omega (107 aa).

The protein belongs to the RNA polymerase subunit omega family. The RNAP catalytic core consists of 2 alpha, 1 beta, 1 beta' and 1 omega subunit. When a sigma factor is associated with the core the holoenzyme is formed, which can initiate transcription.

It catalyses the reaction RNA(n) + a ribonucleoside 5'-triphosphate = RNA(n+1) + diphosphate. Functionally, promotes RNA polymerase assembly. Latches the N- and C-terminal regions of the beta' subunit thereby facilitating its interaction with the beta and alpha subunits. The protein is DNA-directed RNA polymerase subunit omega of Mycolicibacterium smegmatis (strain ATCC 700084 / mc(2)155) (Mycobacterium smegmatis).